A 299-amino-acid chain; its full sequence is Probable lipid kinase YegS (299 aa).

The 132-residue stretch at 2-133 (ADLPASLLIL…IDIAQVNKET (132 aa)) folds into the DAGKc domain. Residues threonine 40, 66-72 (GDGTINE), and threonine 95 each bind ATP. Leucine 215, aspartate 218, and leucine 220 together coordinate Mg(2+). Catalysis depends on glutamate 271, which acts as the Proton acceptor.

This sequence belongs to the diacylglycerol/lipid kinase family. YegS lipid kinase subfamily. The cofactor is Mg(2+). It depends on Ca(2+) as a cofactor.

It localises to the cytoplasm. Probably phosphorylates lipids; the in vivo substrate is unknown. The protein is Probable lipid kinase YegS of Escherichia fergusonii (strain ATCC 35469 / DSM 13698 / CCUG 18766 / IAM 14443 / JCM 21226 / LMG 7866 / NBRC 102419 / NCTC 12128 / CDC 0568-73).